We begin with the raw amino-acid sequence, 655 residues long: MVLSTEENTGVDSVNLPSGETGLGEKDQESVNNLCSQYEEKVRPCIDLIDSLRALGVEQDLALPAIAVIGDQSSGKSSVLEALSGVALPRGSGIVTRCPLVLKLRKLNEGEEWRGKVSYDDIEVELSDPSEVEEAINKGQNFIAGVGLGISDKLISLDVSSPNVPDLTLIDLPGITRVAVGNQPADIGRQIKRLIKTYIQKQETINLVVVPSNVDIATTEALSMAQEVDPEGDRTIGILTKPDLVDRGTEDKVVDVVRNLVYHLKKGYMIVKCRGQQDIQEQLSLTEALQNEQIFFKEHPHFRVLLEDGKATVPCLAERLTAELISHICKSLPLLENQIKESHQSASEELQKYGMDIPEDDSEKTFFLIEKINAFNQDITALVQGEENVAEGECRLFTRLRKEFLSWSKEIEKNFAKGYAVLYNEVWAFEKQYRGRELPGFVNYKTFENIIRRQIKTLEEPAIEMLHTVTEIVRAAFTSVSEKNFSEFYNLHRTTKSKLEDIRLEQEKEAEMSIRLHFKMEQIIYCQDQIYRGALQKVREEEAEEEKKTKHGTSSSSQSQDLQTSSMAEIFQHLNAYRQEAHNRISSHVPLIIQYFILKMFAERLQKGMLQLLQDKDSCSWLLKEQSDTSEKRKFLKERLARLAQARRRLAKFPG.

Positions 1-18 (MVLSTEENTGVDSVNLPS) are enriched in polar residues. Positions 1-28 (MVLSTEENTGVDSVNLPSGETGLGEKDQ) are disordered. The Dynamin-type G domain occupies 60-333 (DLALPAIAVI…LISHICKSLP (274 aa)). Residues 70–77 (GDQSSGKS) are G1 motif. 70-77 (GDQSSGKS) contacts GTP. A G2 motif region spans residues 95-97 (VTR). Residues 171-174 (DLPG) form a G3 motif region. Residues 171–175 (DLPGI) and 240–243 (TKPD) each bind GTP. The G4 motif stretch occupies residues 240 to 243 (TKPD). A G5 motif region spans residues 272–275 (KCRG). The tract at residues 542–562 (EAEEEKKTKHGTSSSSQSQDL) is disordered. A compositionally biased stretch (low complexity) spans 552 to 562 (GTSSSSQSQDL). One can recognise a GED domain in the interval 567 to 655 (MAEIFQHLNA…ARRRLAKFPG (89 aa)).

This sequence belongs to the TRAFAC class dynamin-like GTPase superfamily. Dynamin/Fzo/YdjA family.

It is found in the cytoplasm. Its function is as follows. Interferon-induced dynamin-like GTPase with antiviral activity against vesicular stomatitis virus (VSV) and Hantaan virus (HNTV). The sequence is that of Interferon-induced GTP-binding protein Mx2 (Mx2) from Mus musculus (Mouse).